The primary structure comprises 179 residues: Tetratricopeptide repeat protein 36 (179 aa).

TPR repeat units follow at residues 43–76 (SLQL…CPKN), 78–110 (SAYN…AGPK), and 115–148 (CQAY…GSSF).

Belongs to the TTC36 family.

The chain is Tetratricopeptide repeat protein 36 from Caenorhabditis elegans.